A 292-amino-acid chain; its full sequence is Light-independent protochlorophyllide reductase iron-sulfur ATP-binding protein (292 aa).

Residues 10–15 (GIGKST) and K39 each bind ATP. Mg(2+) is bound at residue S14. C95 is a binding site for [4Fe-4S] cluster. 182-183 (NR) serves as a coordination point for ATP.

Belongs to the NifH/BchL/ChlL family. In terms of assembly, homodimer. Protochlorophyllide reductase is composed of three subunits; ChlL, ChlN and ChlB. It depends on [4Fe-4S] cluster as a cofactor.

The protein resides in the plastid. It localises to the chloroplast. It carries out the reaction chlorophyllide a + oxidized 2[4Fe-4S]-[ferredoxin] + 2 ADP + 2 phosphate = protochlorophyllide a + reduced 2[4Fe-4S]-[ferredoxin] + 2 ATP + 2 H2O. The protein operates within porphyrin-containing compound metabolism; chlorophyll biosynthesis (light-independent). In terms of biological role, component of the dark-operative protochlorophyllide reductase (DPOR) that uses Mg-ATP and reduced ferredoxin to reduce ring D of protochlorophyllide (Pchlide) to form chlorophyllide a (Chlide). This reaction is light-independent. The L component serves as a unique electron donor to the NB-component of the complex, and binds Mg-ATP. In Huperzia lucidula (Shining clubmoss), this protein is Light-independent protochlorophyllide reductase iron-sulfur ATP-binding protein.